The sequence spans 88 residues: MWQSVGLTVLVIVATLICVLLFMLFGWYVVWQLFLSKFKFLRELVGDTGSPQAETEPSESESERSSPPTPRQRPKTARQRVIPPDSTT.

Residues 10 to 30 (LVIVATLICVLLFMLFGWYVV) traverse the membrane as a helical segment. A disordered region spans residues 48–88 (TGSPQAETEPSESESERSSPPTPRQRPKTARQRVIPPDSTT).

The protein belongs to the SMIM13 family.

The protein resides in the membrane. The chain is Small integral membrane protein 13 (smim13) from Danio rerio (Zebrafish).